Consider the following 252-residue polypeptide: Chitooligosaccharide deacetylase (252 aa).

The Mg(2+) site is built by His-61 and His-125.

The protein belongs to the YdjC deacetylase family. ChbG subfamily. In terms of assembly, homodimer. Mg(2+) serves as cofactor.

The protein resides in the cytoplasm. It carries out the reaction N,N'-diacetylchitobiose + H2O = N-acetyl-beta-D-glucosaminyl-(1-&gt;4)-D-glucosamine + acetate. The enzyme catalyses diacetylchitobiose-6'-phosphate + H2O = N'-monoacetylchitobiose-6'-phosphate + acetate. It functions in the pathway glycan degradation; chitin degradation. Involved in the degradation of chitin. ChbG is essential for growth on the acetylated chitooligosaccharides chitobiose and chitotriose but is dispensable for growth on cellobiose and chitosan dimer, the deacetylated form of chitobiose. Deacetylation of chitobiose-6-P and chitotriose-6-P is necessary for both the activation of the chb promoter by the regulatory protein ChbR and the hydrolysis of phosphorylated beta-glucosides by the phospho-beta-glucosidase ChbF. Catalyzes the removal of only one acetyl group from chitobiose-6-P to yield monoacetylchitobiose-6-P, the inducer of ChbR and the substrate of ChbF. This chain is Chitooligosaccharide deacetylase, found in Salmonella enteritidis PT4 (strain P125109).